The primary structure comprises 405 residues: Putative arsenical pump-driving ATPase (405 aa).

8 to 15 contacts ATP; it reads GKGGVGKT.

This sequence belongs to the arsA ATPase family.

The catalysed reaction is arsenite(in) + ATP + H2O = arsenite(out) + ADP + phosphate + H(+). In terms of biological role, anion-transporting ATPase. Catalyzes the extrusion of arsenite. The polypeptide is Putative arsenical pump-driving ATPase (Prosthecochloris vibrioformis (Chlorobium vibrioforme)).